A 77-amino-acid polypeptide reads, in one-letter code: Acyl carrier protein (77 aa).

The Carrier domain occupies 1-76; it reads MAVFDDVRDV…DVVNYIEKLG (76 aa). Position 36 is an O-(pantetheine 4'-phosphoryl)serine (S36).

It belongs to the acyl carrier protein (ACP) family. 4'-phosphopantetheine is transferred from CoA to a specific serine of apo-ACP by AcpS. This modification is essential for activity because fatty acids are bound in thioester linkage to the sulfhydryl of the prosthetic group.

Its subcellular location is the cytoplasm. The protein operates within lipid metabolism; fatty acid biosynthesis. Functionally, carrier of the growing fatty acid chain in fatty acid biosynthesis. This Campylobacter curvus (strain 525.92) protein is Acyl carrier protein.